The chain runs to 96 residues: (4S)-4-hydroxy-5-phosphonooxypentane-2,3-dione isomerase (96 aa).

Residues 2–91 (HVTLVEINVH…MTGPRKKRLF (90 aa)) form the ABM domain.

The protein belongs to the LsrG family. As to quaternary structure, homodimer.

The protein localises to the cytoplasm. It carries out the reaction (2S)-2-hydroxy-3,4-dioxopentyl phosphate = 3-hydroxy-2,4-dioxopentyl phosphate. Functionally, involved in the degradation of phospho-AI-2, thereby terminating induction of the lsr operon and closing the AI-2 signaling cycle. Catalyzes the conversion of (4S)-4-hydroxy-5-phosphonooxypentane-2,3-dione (P-DPD) to 3-hydroxy-5-phosphonooxypentane-2,4-dione (P-HPD). The protein is (4S)-4-hydroxy-5-phosphonooxypentane-2,3-dione isomerase of Shigella flexneri serotype 5b (strain 8401).